Reading from the N-terminus, the 160-residue chain is Probable cyclic pyranopterin monophosphate synthase (160 aa).

Residues 1 to 12 are compositionally biased toward basic and acidic residues; sequence MSDDSELTHVTD. The tract at residues 1–24 is disordered; it reads MSDDSELTHVTDDGDAQMVDVGEK. Residues 78 to 80 and 114 to 115 contribute to the substrate site; these read MCH and ME. Aspartate 129 is an active-site residue.

It belongs to the MoaC family. In terms of assembly, homohexamer; trimer of dimers.

The catalysed reaction is (8S)-3',8-cyclo-7,8-dihydroguanosine 5'-triphosphate = cyclic pyranopterin phosphate + diphosphate. It functions in the pathway cofactor biosynthesis; molybdopterin biosynthesis. Its function is as follows. Catalyzes the conversion of (8S)-3',8-cyclo-7,8-dihydroguanosine 5'-triphosphate to cyclic pyranopterin monophosphate (cPMP). The polypeptide is Probable cyclic pyranopterin monophosphate synthase (Natronomonas pharaonis (strain ATCC 35678 / DSM 2160 / CIP 103997 / JCM 8858 / NBRC 14720 / NCIMB 2260 / Gabara) (Halobacterium pharaonis)).